The chain runs to 157 residues: Protein Smg homolog (157 aa).

Belongs to the Smg family.

The protein is Protein Smg homolog of Aliivibrio fischeri (strain ATCC 700601 / ES114) (Vibrio fischeri).